Here is a 630-residue protein sequence, read N- to C-terminus: Pentatricopeptide repeat-containing protein At2g03880, mitochondrial (630 aa).

A mitochondrion-targeting transit peptide spans 1–76 (MKSVMSKIKL…LIKCCISNRA (76 aa)). PPR repeat units follow at residues 60 to 94 (DSAT…GHRP), 95 to 125 (MMFL…MPQR), 126 to 160 (NVIS…NVRP), 161 to 192 (NVYT…GLES), 193 to 223 (DVFV…MVTG), 224 to 258 (DAIV…GFIA), 259 to 289 (EQAT…IVKY), 292 to 322 (DLIL…MKER), 323 to 357 (DVIT…GTKP), 358 to 388 (NYIT…MKKL), and 394 to 424 (VREH…MECE). The type E motif stretch occupies residues 429–504 (TWRTLLGACR…EPGCSWIEVN (76 aa)). A type E(+) motif region spans residues 505–535 (KQIHAFIIGDNSHPQIVEVSKKLNQLIHRLT). A type DYW motif region spans residues 536–630 (GIGYVPETNF…DGKCSCGDYW (95 aa)).

It belongs to the PPR family. PCMP-H subfamily.

It localises to the mitochondrion. This chain is Pentatricopeptide repeat-containing protein At2g03880, mitochondrial (PCMP-H44), found in Arabidopsis thaliana (Mouse-ear cress).